Here is a 727-residue protein sequence, read N- to C-terminus: Prolyl endopeptidase-like (727 aa).

Residues Ser-559, Asp-645, and His-690 each act as charge relay system in the active site.

Belongs to the peptidase S9A family. As to quaternary structure, homodimer. Interacts with the AP-1 complex.

It is found in the cytoplasm. The protein resides in the cytosol. The protein localises to the golgi apparatus. Its subcellular location is the trans-Golgi network. It localises to the cytoskeleton. It is found in the nucleus. Functionally, serine peptidase whose precise substrate specificity remains unclear. Does not cleave peptides after a arginine or lysine residue. Regulates trans-Golgi network morphology and sorting by regulating the membrane binding of the AP-1 complex. May play a role in the regulation of synaptic vesicle exocytosis. This Macaca fascicularis (Crab-eating macaque) protein is Prolyl endopeptidase-like (PREPL).